Consider the following 385-residue polypeptide: Putative transporter YthQ (385 aa).

8 helical membrane passes run 24 to 44 (AVID…FVIY), 67 to 87 (WLYA…FLME), 106 to 128 (YALL…IVLP), 133 to 155 (SVLI…HIFF), 176 to 193 (TLVR…IVFT), 197 to 214 (LLAL…IRSL), 304 to 324 (AFTV…LLVY), and 365 to 385 (ILHY…LLFT).

The protein localises to the cell membrane. This chain is Putative transporter YthQ (ythQ), found in Bacillus subtilis (strain 168).